Consider the following 62-residue polypeptide: MTNHIHFRCPCCHGSQYRTSSFDVSDMNPFGAKCIFCKSMMITFDNISQYLNASRLSLDLKK.

Belongs to the YmcF/YnqF peptide family.

The chain is Protein YnfQ from Escherichia coli (strain K12).